A 285-amino-acid polypeptide reads, in one-letter code: Protease HtpX homolog (285 aa).

A run of 2 helical transmembrane segments spans residues 7 to 27 (TAML…MIGG) and 30 to 50 (GMTI…WFSD). His131 is a Zn(2+) binding site. Residue Glu132 is part of the active site. His135 contributes to the Zn(2+) binding site. A run of 2 helical transmembrane segments spans residues 146–166 (ISAT…FFGG) and 177–197 (IAGI…QMAI). Glu202 provides a ligand contact to Zn(2+).

The protein belongs to the peptidase M48B family. Zn(2+) is required as a cofactor.

The protein resides in the cell inner membrane. This Burkholderia thailandensis (strain ATCC 700388 / DSM 13276 / CCUG 48851 / CIP 106301 / E264) protein is Protease HtpX homolog.